The chain runs to 496 residues: Glutamyl-tRNA(Gln) amidotransferase subunit A (496 aa).

Catalysis depends on charge relay system residues Lys79 and Ser159. The Acyl-ester intermediate role is filled by Ser183.

This sequence belongs to the amidase family. GatA subfamily. In terms of assembly, heterotrimer of A, B and C subunits.

It carries out the reaction L-glutamyl-tRNA(Gln) + L-glutamine + ATP + H2O = L-glutaminyl-tRNA(Gln) + L-glutamate + ADP + phosphate + H(+). Functionally, allows the formation of correctly charged Gln-tRNA(Gln) through the transamidation of misacylated Glu-tRNA(Gln) in organisms which lack glutaminyl-tRNA synthetase. The reaction takes place in the presence of glutamine and ATP through an activated gamma-phospho-Glu-tRNA(Gln). This is Glutamyl-tRNA(Gln) amidotransferase subunit A from Bartonella quintana (strain Toulouse) (Rochalimaea quintana).